The primary structure comprises 357 residues: Peptide chain release factor 1 (357 aa).

Position 236 is an N5-methylglutamine (glutamine 236). A compositionally biased stretch (basic and acidic residues) spans 283 to 309 (ERRKKDQERANNRREQIGSGDRSERIR). Residues 283 to 313 (ERRKKDQERANNRREQIGSGDRSERIRTYNF) are disordered.

The protein belongs to the prokaryotic/mitochondrial release factor family. Methylated by PrmC. Methylation increases the termination efficiency of RF1.

The protein localises to the cytoplasm. Its function is as follows. Peptide chain release factor 1 directs the termination of translation in response to the peptide chain termination codons UAG and UAA. This chain is Peptide chain release factor 1, found in Rickettsia bellii (strain OSU 85-389).